The sequence spans 347 residues: Protein PET130 (347 aa).

It localises to the mitochondrion matrix. This is Protein PET130 (PET130) from Saccharomyces cerevisiae (strain ATCC 204508 / S288c) (Baker's yeast).